The following is a 532-amino-acid chain: MKKIMLIASAMSALSLPFSASAIELGEEGLECGPYAKVGVVGGMITGVESARLDPADAEGKKHLSLTNGLPFGGTLAAGMTIAPGFRAEIGVMYLTNITAQVEEGKVKADSVGETKADSVGGKDAPIRKRFKLTPPQPTIMPISIAVRDFGIDIPNQTSAASTSRSLRLNDEQRAAARIAWLKNCAGIDYRVKNPNDPNGPMVINPILLNIPQGNPNPVGNPPQRANPPAGFAIHNHEQWRHLVVGLAALSNANKPSASPVKVLSDKITQIYSDIKHLADIAGIDVPDTSLPNSASVEQIQNKMQELNDLLEELRESFDGYLGGNAFANQIQLNFVMPQQAQQQGQGQQQQAQATAQEAVAAAAVRLLNGNDQIAQLYKDLVKLQRHAGIKKAMEKLAAQQEEDAKNQGEGDCKQQQGTSEKSKKGKDKEAEFDLSMIVGQVKLYADVMITESVSIYAGVGAGLAYTSGKIDNKDIKGHTGMVASGALGVAINAAEGVYVDIEGSYMYSFSKIEEKYSINPLMASVSVRYNF.

A signal peptide spans 1–22 (MKKIMLIASAMSALSLPFSASA). A helical transmembrane segment spans residues 67-87 (TNGLPFGGTLAAGMTIAPGFR). A disordered region spans residues 401–428 (QEEDAKNQGEGDCKQQQGTSEKSKKGKD). Over residues 403 to 413 (EDAKNQGEGDC) the composition is skewed to basic and acidic residues. The helical transmembrane segment at 480–500 (TGMVASGALGVAINAAEGVYV) threads the bilayer.

It is found in the cell membrane. May be an adherent factor for rickettsial adsorption to the host-cell surface and a determinant of virulence of individual rickettsial strain. It is the major outer membrane protein. This chain is 56 kDa type-specific antigen, found in Orientia tsutsugamushi (Rickettsia tsutsugamushi).